A 314-amino-acid polypeptide reads, in one-letter code: Ribosomal RNA small subunit methyltransferase H (314 aa).

S-adenosyl-L-methionine is bound by residues 40–42, aspartate 60, phenylalanine 85, aspartate 107, and glutamine 114; that span reads GGH.

Belongs to the methyltransferase superfamily. RsmH family.

The protein resides in the cytoplasm. It catalyses the reaction cytidine(1402) in 16S rRNA + S-adenosyl-L-methionine = N(4)-methylcytidine(1402) in 16S rRNA + S-adenosyl-L-homocysteine + H(+). Functionally, specifically methylates the N4 position of cytidine in position 1402 (C1402) of 16S rRNA. In Hydrogenovibrio crunogenus (strain DSM 25203 / XCL-2) (Thiomicrospira crunogena), this protein is Ribosomal RNA small subunit methyltransferase H.